We begin with the raw amino-acid sequence, 344 residues long: Phenylalanine--tRNA ligase alpha subunit (344 aa).

Glutamate 256 provides a ligand contact to Mg(2+).

This sequence belongs to the class-II aminoacyl-tRNA synthetase family. Phe-tRNA synthetase alpha subunit type 1 subfamily. In terms of assembly, tetramer of two alpha and two beta subunits. Mg(2+) is required as a cofactor.

Its subcellular location is the cytoplasm. It catalyses the reaction tRNA(Phe) + L-phenylalanine + ATP = L-phenylalanyl-tRNA(Phe) + AMP + diphosphate + H(+). The protein is Phenylalanine--tRNA ligase alpha subunit of Geobacillus kaustophilus (strain HTA426).